Consider the following 403-residue polypeptide: uncharacterized protein (403 aa).

This is an uncharacterized protein from Aquifex aeolicus (strain VF5).